Here is a 410-residue protein sequence, read N- to C-terminus: Lissencephaly-1 homolog B (410 aa).

Residues 7-39 form the LisH domain; it reads QRDELNRAIADYLRSNGYEEAYSTFKKEAELDV. The stretch at 56–82 forms a coiled coil; the sequence is TSVIRLQKKVMELESKLNEAKEEITLG. 7 WD repeats span residues 106-147, 148-187, 190-229, 232-271, 274-333, 336-377, and 379-410; these read GHRS…RTLK, GHTD…CIRT, GHDH…CVKT, GHRE…CKAE, EHEH…CLMT, GHDN…KTLS, and HEHF…WECR.

It belongs to the WD repeat LIS1/nudF family. In terms of assembly, can self-associate. Component of the cytosolic PAF-AH (I) heterotetrameric enzyme, which is composed of PAFAH1B1 (beta), PAFAH1B2 (alpha2) and PAFAH1B3 (alpha1) subunits. The catalytic activity of the enzyme resides in the alpha1 (PAFAH1B3) and alpha2 (PAFAH1B2) subunits, whereas the beta subunit (PAFAH1B1) has regulatory activity. Trimer formation is not essential for the catalytic activity. Interacts with dynein, dynactin, nde1 and ndel1. As to expression, enriched in the photoreceptor cell layer.

It localises to the cytoplasm. It is found in the cytoskeleton. The protein localises to the microtubule organizing center. The protein resides in the centrosome. Functionally, regulatory subunit (beta subunit) of the cytosolic type I platelet-activating factor (PAF) acetylhydrolase (PAF-AH (I)), an enzyme that catalyzes the hydrolyze of the acetyl group at the sn-2 position of PAF and its analogs and participates in the PAF inactivation. Regulates the PAF-AH (I) activity in a catalytic dimer composition-dependent manner. Positively regulates the activity of the minus-end directed microtubule motor protein dynein. May enhance dynein-mediated microtubule sliding by targeting dynein to the microtubule plus end. Required for several dynein- and microtubule-dependent processes such as the maintenance of Golgi integrity, the peripheral transport of microtubule fragments and the coupling of the nucleus and centrosome. May be required for proliferation of neuronal precursors and neuronal migration. Involved in the positioning of nuclei in photoreceptor cells. This chain is Lissencephaly-1 homolog B (pafah1b1b), found in Danio rerio (Zebrafish).